Consider the following 434-residue polypeptide: Neuropeptide receptor 22 (434 aa).

Over 1–55 (MDEGGGIGSSLLSRITTTASEIMMRNEPTTTENPAVQEMNHIYHLTPSMKMLCIL) the chain is Extracellular. The helical transmembrane segment at 56-76 (FYSILCVCCVYGNVLVILVIV) threads the bilayer. The Cytoplasmic segment spans residues 77–86 (YFKRLRTATN). Residues 87–107 (ILILNLAVADLLISVFCIPFS) traverse the membrane as a helical segment. Topologically, residues 108–128 (YWQVLIYDDQRWLFGSMMCSL) are extracellular. Residues Cys-126 and Cys-204 are joined by a disulfide bond. Residues 129 to 149 (LAFLQAMAVFLSAWTLVVISF) form a helical membrane-spanning segment. The Cytoplasmic portion of the chain corresponds to 150 to 169 (DRWMAIMFLLTPNIRITRRR). A helical membrane pass occupies residues 170–190 (ALYLVAATWIFSILMALPLLF). Residues 191–226 (TTRFFEDQDGLPNCGENWTYFGDSGEQVRKVYSSMV) lie on the Extracellular side of the membrane. Asn-207 is a glycosylation site (N-linked (GlcNAc...) asparagine). Residues 227–247 (LILQYVVPQAVLIITYTHIGI) traverse the membrane as a helical segment. Residues 248–277 (KMWNSRVPGMQNGATKKMIVDRHESVKKLV) lie on the Cytoplasmic side of the membrane. The chain crosses the membrane as a helical span at residues 278–298 (PMVILISALFALCWLPLLILI). Topologically, residues 299-310 (NVIPEFYPDINS) are extracellular. A helical membrane pass occupies residues 311 to 331 (WGYILYLWWFAHGLAMSHSMV). Residues 332-434 (NPIIYFIRNA…VRNNSANSLA (103 aa)) are Cytoplasmic-facing.

The protein belongs to the G-protein coupled receptor 1 family. In terms of tissue distribution, expressed in many cells, mainly in the head region, with expression detected in the head muscles, I2 neurons, MC neurons, RIH neuron, AIA neurons, AUA neurons, ASK neurons, ASI neurons, a few B-type motorneurons in the posterior ventral nerve cord, pharyngeal muscles, body wall muscles, the intestine and a few classes of unidentified cells anterior to the nerve ring. Expression in the MC neurons is important to mediate suppression of feeding while expression in the RIH neuron is important for the facilitation of egg-laying. No expression detected in other tissues including hypodermis.

The protein localises to the cell membrane. Its function is as follows. Receptor for the LURY-1-1 and LURY-1-2 peptides which control food-related processes including feeding, lifespan, egg-laying and roaming behavior. Receptor for flp-7 which stimulates serotonin-induced fat loss. Serotonin induces secretion of flp-7 from neurons and binding to npr-22 which leads to induction of the atgp-1 lipase and subsequent fat loss. Acts in vitro as a receptor for the flp-7 FMRFamide-like neuropeptides TPMQRSSMVRF-amide, SPMQRSSMVRF-amide, SPMERSAMVRF-amide and SPMDRSKMVRF-amide. Also acts in vitro as a receptor for a number of other FMRFamide-like neuropeptides including the flp-1 neuropeptide PNFMRY-amide, the flp-9 neuropeptide KPSFVRF-amide, the flp-11 neuropeptides AMRNALVRF-amide, ASGGMRNALVRF-amide and NGAPQPFVRF-amide, the flp-13 neuropeptides AADGAPLIRF-amide, ASPSAPLIRF-amide, SPSAVPLIRF-amide, SAAAPLIRF-amide and ASSAPLIRF-amide, and the flp-22 neuropeptide SPSAKWMRF-amide. The SPMERSAMVRF-amide neuropeptide from flp-7 acts as the strongest in vitro activator of npr-22. This is Neuropeptide receptor 22 from Caenorhabditis elegans.